Reading from the N-terminus, the 401-residue chain is Probable tRNA sulfurtransferase (401 aa).

Positions 60–165 constitute a THUMP domain; sequence EPIIEKLKTV…QDGTYVTCRD (106 aa). Residues 183 to 184, 208 to 209, arginine 265, glycine 287, and glutamine 296 contribute to the ATP site; these read ML and HF.

It belongs to the ThiI family.

It localises to the cytoplasm. It carries out the reaction [ThiI sulfur-carrier protein]-S-sulfanyl-L-cysteine + a uridine in tRNA + 2 reduced [2Fe-2S]-[ferredoxin] + ATP + H(+) = [ThiI sulfur-carrier protein]-L-cysteine + a 4-thiouridine in tRNA + 2 oxidized [2Fe-2S]-[ferredoxin] + AMP + diphosphate. The catalysed reaction is [ThiS sulfur-carrier protein]-C-terminal Gly-Gly-AMP + S-sulfanyl-L-cysteinyl-[cysteine desulfurase] + AH2 = [ThiS sulfur-carrier protein]-C-terminal-Gly-aminoethanethioate + L-cysteinyl-[cysteine desulfurase] + A + AMP + 2 H(+). Its pathway is cofactor biosynthesis; thiamine diphosphate biosynthesis. Its function is as follows. Catalyzes the ATP-dependent transfer of a sulfur to tRNA to produce 4-thiouridine in position 8 of tRNAs, which functions as a near-UV photosensor. Also catalyzes the transfer of sulfur to the sulfur carrier protein ThiS, forming ThiS-thiocarboxylate. This is a step in the synthesis of thiazole, in the thiamine biosynthesis pathway. The sulfur is donated as persulfide by IscS. The chain is Probable tRNA sulfurtransferase from Geobacillus kaustophilus (strain HTA426).